The chain runs to 1241 residues: ATP-dependent helicase/nuclease subunit A (1241 aa).

One can recognise a UvrD-like helicase ATP-binding domain in the interval 12–485; sequence SQWTDDQWKA…IDLAKNFRSR (474 aa). An ATP-binding site is contributed by 33-40; it reads AAAGSGKT. The region spanning 505–805 is the UvrD-like helicase C-terminal domain; the sequence is GEIDYDADAE…RIMTIHKSKG (301 aa).

Belongs to the helicase family. AddA subfamily. As to quaternary structure, heterodimer of AddA and AddB/RexB. Requires Mg(2+) as cofactor.

The catalysed reaction is Couples ATP hydrolysis with the unwinding of duplex DNA by translocating in the 3'-5' direction.. It catalyses the reaction ATP + H2O = ADP + phosphate + H(+). Its function is as follows. The heterodimer acts as both an ATP-dependent DNA helicase and an ATP-dependent, dual-direction single-stranded exonuclease. Recognizes the chi site generating a DNA molecule suitable for the initiation of homologous recombination. The AddA nuclease domain is required for chi fragment generation; this subunit has the helicase and 3' -&gt; 5' nuclease activities. This Bacillus cereus (strain ZK / E33L) protein is ATP-dependent helicase/nuclease subunit A.